Reading from the N-terminus, the 468-residue chain is Probable Xaa-Pro aminopeptidase PEPP (468 aa).

Residues aspartate 264, aspartate 275, glutamate 398, and glutamate 438 each coordinate Mn(2+).

The protein belongs to the peptidase M24B family. Mn(2+) is required as a cofactor.

The catalysed reaction is Release of any N-terminal amino acid, including proline, that is linked to proline, even from a dipeptide or tripeptide.. In terms of biological role, catalyzes the removal of a penultimate prolyl residue from the N-termini of peptides. The chain is Probable Xaa-Pro aminopeptidase PEPP (PEPP) from Paracoccidioides brasiliensis (strain Pb03).